The primary structure comprises 273 residues: MSDIHSLLVAAILGVVEGLTEFLPVSSTGHMIIVGHLLGFEGDTANTFEVVIQLGSILAVVVMFWRRLFGLIGIHFGKPPAHEGQGSGRLSLIHILLGMIPAVVMGLIFHDTIKSLFNPVNVMYALIVGGVLLIAAEVLKPKQPRAVGIDDMTYRQAFVIGCFQCLALWPGFSRSGATISGGMLMGVSRYAASEFSFLLAVPMMMGATVLDVYKSIGFLNMGDVPMFAVGFVMAFIVALIAIKTFLQLIKRISFIPFAIYRFIVAAAVYVVFF.

8 helical membrane-spanning segments follow: residues 13–35 (LGVV…IIVG), 45–65 (ANTF…VMFW), 90–110 (LSLI…LIFH), 116–136 (LFNP…LIAA), 157–177 (AFVI…RSGA), 190–210 (YAAS…ATVL), 222–242 (GDVP…LIAI), and 252–272 (ISFI…YVVF).

It belongs to the UppP family.

It is found in the cell inner membrane. The enzyme catalyses di-trans,octa-cis-undecaprenyl diphosphate + H2O = di-trans,octa-cis-undecaprenyl phosphate + phosphate + H(+). Its function is as follows. Catalyzes the dephosphorylation of undecaprenyl diphosphate (UPP). Confers resistance to bacitracin. This chain is Undecaprenyl-diphosphatase, found in Klebsiella pneumoniae subsp. pneumoniae (strain ATCC 700721 / MGH 78578).